We begin with the raw amino-acid sequence, 174 residues long: MESIGIFFGSDTGNTENVAKLIHKYIGTNISSIHDIANTNKKDIELFNILIFGVSTWYYGELQCDWDDFLPTLKKINFNNKIIALFGCGDQEDYSEYFCDGIGILYNVIRLSKNVRFIGSWTSKGYSFECSKALDKNKNFLGLVIDEDRQPEQSNQRIIQWTKKIKTELNSLLN.

A Flavodoxin-like domain is found at 4–166 (IGIFFGSDTG…RIIQWTKKIK (163 aa)).

This sequence belongs to the flavodoxin family. FMN serves as cofactor.

Its function is as follows. Low-potential electron donor to a number of redox enzymes. The chain is Flavodoxin (fldA) from Buchnera aphidicola subsp. Baizongia pistaciae (strain Bp).